The following is a 116-amino-acid chain: Orphan antitoxin YagB (116 aa).

This sequence belongs to the CbeA/YafW/YfjZ antitoxin family.

In terms of biological role, putative antitoxin component of a type IV toxin-antitoxin (TA) system; its cognate toxin is unknown. This chain is Orphan antitoxin YagB (yagB), found in Escherichia coli (strain K12).